The sequence spans 217 residues: Small ribosomal subunit protein uS3 (217 aa).

In terms of domain architecture, KH type-2 spans 40–110; the sequence is IRDVINKGFN…EVYINIHEVR (71 aa).

This sequence belongs to the universal ribosomal protein uS3 family. As to quaternary structure, part of the 30S ribosomal subunit. Forms a tight complex with proteins S10 and S14.

In terms of biological role, binds the lower part of the 30S subunit head. Binds mRNA in the 70S ribosome, positioning it for translation. This is Small ribosomal subunit protein uS3 from Rickettsia massiliae (strain Mtu5).